Reading from the N-terminus, the 824-residue chain is Protein bicaudal D homolog 2 (824 aa).

An N-acetylserine modification is found at serine 2. The stretch at 20–269 forms a coiled coil; sequence EWLRAEVKRL…ELSHYMSIND (250 aa). The interval 25 to 398 is interacts with DYNLL1, DYNC1H1, DYNC1I2, DCTN1 and DCTN2; sequence EVKRLSHELA…RLTENLSALR (374 aa). Phosphoserine is present on residues serine 190, serine 224, and serine 318. Residues 311-330 are disordered; the sequence is LPLDNKTSTPKKEGLAPPSP. Threonine 319 is subject to Phosphothreonine. The interval 334-599 is interaction with KIF5A; sequence SDLLSELNIS…LLAPEAGRAD (266 aa). The stretch at 338-537 forms a coiled coil; that stretch reads SELNISEIQK…VTFSEELANL (200 aa). Phosphoserine occurs at positions 343 and 395. Disordered stretches follow at residues 398-425, 559-622, and 804-824; these read RRLQ…GDYY, EGQG…DPRR, and EQTR…TPSL. A compositionally biased stretch (basic and acidic residues) spans 402 to 422; that stretch reads ASKERQTALDNEKDRDSHEDG. A phosphoserine mark is found at serine 568, serine 574, and serine 582. The tract at residues 590–824 is interaction with RANBP2; that stretch reads LLAPEAGRAD…PKTKPATPSL (235 aa). Threonine 602 is subject to Phosphothreonine. The span at 604–618 shows a compositional bias: low complexity; that stretch reads DSSPSPGSSLPSPLS. Residues 666–808 adopt a coiled-coil conformation; the sequence is DKDKEALMEE…LELDHEQTRR (143 aa). Positions 666–814 are interacts with RAB6A; sequence DKDKEALMEE…QTRRGRAKAA (149 aa). Threonine 821 is subject to Phosphothreonine. Residue serine 823 is modified to Phosphoserine.

The protein belongs to the BicD family. In terms of assembly, part of a tripartite complex with dynein and dynactin, acts an adapter linking the dynein motor complex and dynactin. Interacts with CPNE4 (via VWFA domain). Interacts with RAB6A. Interacts with NEK9. Interacts with DNAI1. Interacts with DYNC1H1. Interacts with RANBP2. Binds preferentially to tyrosinated microtubules than to detyrosinated microtubules. Interacts with DYNLL1, DYNC1I2; DCTN1, DCTN2 and KIF5A. Interacts with KIF1C. Post-translationally, phosphorylated by NEK9 in vitro. Ubiquitous.

The protein localises to the golgi apparatus. It is found in the cytoplasm. It localises to the cytoskeleton. Its subcellular location is the nucleus envelope. The protein resides in the nucleus. The protein localises to the nuclear pore complex. Its function is as follows. Acts as an adapter protein linking the dynein motor complex to various cargos and converts dynein from a non-processive to a highly processive motor in the presence of dynactin. Facilitates and stabilizes the interaction between dynein and dynactin and activates dynein processivity (the ability to move along a microtubule for a long distance without falling off the track). Facilitates the binding of RAB6A to the Golgi by stabilizing its GTP-bound form. Regulates coat complex coatomer protein I (COPI)-independent Golgi-endoplasmic reticulum transport via its interaction with RAB6A and recruitment of the dynein-dynactin motor complex. Contributes to nuclear and centrosomal positioning prior to mitotic entry through regulation of both dynein and kinesin-1. During G2 phase of the cell cycle, associates with RANBP2 at the nuclear pores and recruits dynein and dynactin to the nuclear envelope to ensure proper positioning of the nucleus relative to centrosomes prior to the onset of mitosis. In Homo sapiens (Human), this protein is Protein bicaudal D homolog 2.